A 467-amino-acid chain; its full sequence is Light-independent protochlorophyllide reductase subunit N (467 aa).

[4Fe-4S] cluster contacts are provided by Cys-22, Cys-47, and Cys-107.

It belongs to the BchN/ChlN family. In terms of assembly, protochlorophyllide reductase is composed of three subunits; ChlL, ChlN and ChlB. Forms a heterotetramer of two ChlB and two ChlN subunits. [4Fe-4S] cluster is required as a cofactor.

It is found in the plastid. The protein localises to the chloroplast. The catalysed reaction is chlorophyllide a + oxidized 2[4Fe-4S]-[ferredoxin] + 2 ADP + 2 phosphate = protochlorophyllide a + reduced 2[4Fe-4S]-[ferredoxin] + 2 ATP + 2 H2O. The protein operates within porphyrin-containing compound metabolism; chlorophyll biosynthesis (light-independent). Its function is as follows. Component of the dark-operative protochlorophyllide reductase (DPOR) that uses Mg-ATP and reduced ferredoxin to reduce ring D of protochlorophyllide (Pchlide) to form chlorophyllide a (Chlide). This reaction is light-independent. The NB-protein (ChlN-ChlB) is the catalytic component of the complex. The sequence is that of Light-independent protochlorophyllide reductase subunit N from Chara vulgaris (Common stonewort).